We begin with the raw amino-acid sequence, 324 residues long: Homocysteine S-methyltransferase 1 (324 aa).

The Hcy-binding domain maps to 6–320; the sequence is IKELIVEHPG…KDIAEIASAV (315 aa). 3 residues coordinate Zn(2+): C238, C305, and C306.

Zn(2+) serves as cofactor.

It localises to the cytoplasm. It catalyses the reaction S-methyl-L-methionine + L-homocysteine = 2 L-methionine + H(+). Homocysteine S-methyltransferase involved in the conversion of S-adenosylmethionine (AdoMet) to methionine to control the methionine/AdoMet ratio. Also converts S-methylmethionine (SMM) to methionine. The chain is Homocysteine S-methyltransferase 1 (MHT1) from Saccharomyces cerevisiae (strain ATCC 204508 / S288c) (Baker's yeast).